The chain runs to 98 residues: Hainantoxin-XVII-2 (98 aa).

Residues 1-40 (MTTVGVSLFRRSPEKITMKIATFLGLSFLLIASYVLICEA) form the signal peptide. A propeptide spanning residues 41–64 (QHPGFQELLILEENMRDPENSKER) is cleaved from the precursor. Cystine bridges form between cysteine 66–cysteine 81 and cysteine 73–cysteine 85.

This sequence belongs to the hainantoxin family. 17 subfamily. In terms of tissue distribution, expressed by the venom gland.

The protein localises to the secreted. Functionally, putative ion channel inhibitor. The chain is Hainantoxin-XVII-2 from Cyriopagopus hainanus (Chinese bird spider).